Here is a 492-residue protein sequence, read N- to C-terminus: Nuclear hormone receptor family member nhr-4 (492 aa).

The segment at residues 47–122 (RLICDVCGDV…VGMNPDSVQN (76 aa)) is a DNA-binding region (nuclear receptor). NR C4-type zinc fingers lie at residues 50-70 (CDVC…CNGC) and 86-110 (CRFG…LKKC). The tract at residues 121-143 (QNERDRNAKNGGMGGPMSSPTQS) is disordered. The NR LBD domain occupies 215–481 (MDFSIHSAVL…ELIQATHKTT (267 aa)).

The protein belongs to the nuclear hormone receptor family.

Its subcellular location is the nucleus. Orphan nuclear receptor. The polypeptide is Nuclear hormone receptor family member nhr-4 (nhr-4) (Caenorhabditis elegans).